The primary structure comprises 140 residues: Sec-independent protein translocase protein TatB (140 aa).

A helical membrane pass occupies residues 2 to 22 (LPGIGFSELLLIGLAALIIIG). The segment at 90-140 (VNSAVMREHPVSPPPPATPPAPPAELPPEAAPHADSQNAPPEADPAKGDRT) is disordered. Residues 100-119 (VSPPPPATPPAPPAELPPEA) are compositionally biased toward pro residues.

It belongs to the TatB family. The Tat system comprises two distinct complexes: a TatABC complex, containing multiple copies of TatA, TatB and TatC subunits, and a separate TatA complex, containing only TatA subunits. Substrates initially bind to the TatABC complex, which probably triggers association of the separate TatA complex to form the active translocon.

Its subcellular location is the cell inner membrane. Part of the twin-arginine translocation (Tat) system that transports large folded proteins containing a characteristic twin-arginine motif in their signal peptide across membranes. Together with TatC, TatB is part of a receptor directly interacting with Tat signal peptides. TatB may form an oligomeric binding site that transiently accommodates folded Tat precursor proteins before their translocation. The polypeptide is Sec-independent protein translocase protein TatB (Hyphomonas neptunium (strain ATCC 15444)).